The primary structure comprises 125 residues: MINAPRVCVQIQSFYVESQSEPDEERFVFAYTVTVRNLGRHEVQLLGRYWLITNGNGRQTEVQGEGVVGEQPIIEPGGEFQYTSGAVMETPLGTMEGHYHMVDHQSKAFQVPIPVFRLAIPSLIH.

The region spanning 1-125 is the ApaG domain; it reads MINAPRVCVQ…FRLAIPSLIH (125 aa).

This is Protein ApaG from Pectobacterium atrosepticum (strain SCRI 1043 / ATCC BAA-672) (Erwinia carotovora subsp. atroseptica).